Reading from the N-terminus, the 181-residue chain is Protein csk22 (181 aa).

Helical transmembrane passes span 5 to 22, 35 to 57, 61 to 78, 91 to 113, and 140 to 162; these read LQSVYPAIIIIFFLYKKI, WLFTRIILFSLFAFGLSIFSAIH, YGYLILGILGGWLLVFFA, IYFRTHIWVEVILLTLFLSRFLY, and LTIGVCFLIAVYYIGFSSFIIKL.

It localises to the cell membrane. The polypeptide is Protein csk22 (csk22) (Bacillus subtilis (strain 168)).